A 709-amino-acid chain; its full sequence is Polyribonucleotide nucleotidyltransferase (709 aa).

Residues Asp-487 and Asp-493 each coordinate Mg(2+). The KH domain occupies 554–613 (PRIHTMKISSDKIKDVIGKGGAVIRALCEETGTTIEIEDDGTIKIAATEGAAAKEAIRRI). The region spanning 623 to 691 (GKIYTGKVMR…RQGRIRLSIK (69 aa)) is the S1 motif domain.

The protein belongs to the polyribonucleotide nucleotidyltransferase family. Component of the RNA degradosome, which is a multiprotein complex involved in RNA processing and mRNA degradation. Requires Mg(2+) as cofactor.

It localises to the cytoplasm. The catalysed reaction is RNA(n+1) + phosphate = RNA(n) + a ribonucleoside 5'-diphosphate. Functionally, involved in mRNA degradation. Catalyzes the phosphorolysis of single-stranded polyribonucleotides processively in the 3'- to 5'-direction. The polypeptide is Polyribonucleotide nucleotidyltransferase (Aliivibrio fischeri (strain ATCC 700601 / ES114) (Vibrio fischeri)).